We begin with the raw amino-acid sequence, 505 residues long: tRNA (guanine(6)-N(2))-methyltransferase THUMP3 (505 aa).

The interval 145 to 182 is disordered; sequence KAKRRKANQSAGKEKADCGQGDKADEKDGKKKHASSTS. Residues 156–173 are compositionally biased toward basic and acidic residues; sequence GKEKADCGQGDKADEKDG. The THUMP domain occupies 171 to 287; that stretch reads KDGKKKHASS…DNEVIVAIAL (117 aa).

The protein belongs to the methyltransferase superfamily. Part of the heterodimeric THUMPD3-TRM112 methyltransferase complex; this complex forms an active tRNA methyltransferase, where TRMT112 acts as an activator of the catalytic subunit THUMPD3. Ubiquitously expressed. Abundantly expressed in the testis, also expressed in the brain, heart, kidney, liver, lung, muscle and spleen.

It localises to the cytoplasm. It carries out the reaction guanosine(6) in tRNA + S-adenosyl-L-methionine = N(2)-methylguanosine(6) in tRNA + S-adenosyl-L-homocysteine + H(+). The catalysed reaction is guanosine(7) in tRNA + S-adenosyl-L-methionine = N(2)-methylguanosine(7) in tRNA + S-adenosyl-L-homocysteine + H(+). Its function is as follows. Catalytic subunit of the THUMPD3-TRM112 methyltransferase complex, that specifically mediates the S-adenosyl-L-methionine-dependent N(2)-methylation of guanosine nucleotide at position 6 (m2G6) in tRNAs. This is one of the major tRNA (guanine-N(2))-methyltransferases. Also catalyzes the S-adenosyl-L-methionine-dependent N(2)-methylation of guanosine nucleotide at position 7 of tRNA(Trp). The protein is tRNA (guanine(6)-N(2))-methyltransferase THUMP3 of Mus musculus (Mouse).